The sequence spans 201 residues: Small ribosomal subunit protein uS4c (201 aa).

Positions 17–44 are disordered; sequence ALPGLTNKKPRTGSDLRNQSRSGKKSQY. Positions 89-149 constitute an S4 RNA-binding domain; the sequence is MRLDNILFRL…DEQKSRALIQ (61 aa).

It belongs to the universal ribosomal protein uS4 family. Part of the 30S ribosomal subunit. Contacts protein S5. The interaction surface between S4 and S5 is involved in control of translational fidelity.

The protein resides in the plastid. The protein localises to the chloroplast. Functionally, one of the primary rRNA binding proteins, it binds directly to 16S rRNA where it nucleates assembly of the body of the 30S subunit. Its function is as follows. With S5 and S12 plays an important role in translational accuracy. The sequence is that of Small ribosomal subunit protein uS4c (rps4) from Atropa belladonna (Belladonna).